A 188-amino-acid chain; its full sequence is Small ribosomal subunit protein eS8 (188 aa).

The disordered stretch occupies residues 1–34 (MGISRDSRHKRRLTGGRYPVHKKKRKYELGRPSS). Positions 7 to 26 (SRHKRRLTGGRYPVHKKKRK) are enriched in basic residues.

It belongs to the eukaryotic ribosomal protein eS8 family.

The protein is Small ribosomal subunit protein eS8 (RPS8) of Theileria parva (East coast fever infection agent).